The sequence spans 182 residues: Cbp/p300-interacting transactivator 4 (182 aa).

The disordered stretch occupies residues 22–129; the sequence is GPHAPRTLQP…PPPPPPALGC (108 aa). Over residues 64-89 the composition is skewed to polar residues; the sequence is SPVSFQPFPVSQSPGAGSTHLQSAAT. Low complexity predominate over residues 100 to 117; it reads AAAGGPSPLQPAPGAAAS.

The protein belongs to the CITED family. As to quaternary structure, interacts via its C-terminal region with the CH1 domain of CREBBP and EP300. Interacts with all TFAP2/AP-2 isoforms. As to expression, strongly expressed in heart, spleen and testis, and weakly in liver and kidney.

Its subcellular location is the nucleus. The protein resides in the cytoplasm. Its function is as follows. Acts as a transcriptional coactivator for TFAP2/AP-2. Enhances estrogen-dependent transactivation mediated by estrogen receptors. May function as an inhibitor of transactivation by HIF1A by disrupting HIF1A interaction with CREBBP. May be involved in regulation of gene expression during development and differentiation of blood cells, endothelial cells and mammary epithelial cells. The polypeptide is Cbp/p300-interacting transactivator 4 (Mus musculus (Mouse)).